Consider the following 122-residue polypeptide: Large ribosomal subunit protein uL14c (122 aa).

It belongs to the universal ribosomal protein uL14 family. As to quaternary structure, part of the 50S ribosomal subunit.

It is found in the plastid. The protein resides in the chloroplast. Functionally, binds to 23S rRNA. This chain is Large ribosomal subunit protein uL14c, found in Chlorella vulgaris (Green alga).